The primary structure comprises 279 residues: Ribosomal RNA small subunit methyltransferase A (279 aa).

The S-adenosyl-L-methionine site is built by asparagine 25, leucine 27, glycine 52, glutamate 73, aspartate 98, and asparagine 120.

It belongs to the class I-like SAM-binding methyltransferase superfamily. rRNA adenine N(6)-methyltransferase family. RsmA subfamily.

Its subcellular location is the cytoplasm. It carries out the reaction adenosine(1518)/adenosine(1519) in 16S rRNA + 4 S-adenosyl-L-methionine = N(6)-dimethyladenosine(1518)/N(6)-dimethyladenosine(1519) in 16S rRNA + 4 S-adenosyl-L-homocysteine + 4 H(+). Its function is as follows. Specifically dimethylates two adjacent adenosines (A1518 and A1519) in the loop of a conserved hairpin near the 3'-end of 16S rRNA in the 30S particle. May play a critical role in biogenesis of 30S subunits. This Magnetococcus marinus (strain ATCC BAA-1437 / JCM 17883 / MC-1) protein is Ribosomal RNA small subunit methyltransferase A.